The sequence spans 152 residues: Small ribosomal subunit protein uS13 (152 aa).

A disordered region spans residues 133 to 152 (GQHTKTTGRRGRTVGVSKKK).

The protein belongs to the universal ribosomal protein uS13 family.

It is found in the cytoplasm. Functionally, located at the top of the head of the 40S subunit, it contacts several helices of the 18S rRNA. This is Small ribosomal subunit protein uS13 (RpS18) from Spodoptera frugiperda (Fall armyworm).